The primary structure comprises 358 residues: DNA polymerase IV (358 aa).

Positions 4-185 constitute a UmuC domain; it reads IIHIDMDCYF…LSLRKIPGVG (182 aa). Asp8 and Asp103 together coordinate Mg(2+). Glu104 is an active-site residue.

Belongs to the DNA polymerase type-Y family. Monomer. Requires Mg(2+) as cofactor.

The protein localises to the cytoplasm. The catalysed reaction is DNA(n) + a 2'-deoxyribonucleoside 5'-triphosphate = DNA(n+1) + diphosphate. Poorly processive, error-prone DNA polymerase involved in untargeted mutagenesis. Copies undamaged DNA at stalled replication forks, which arise in vivo from mismatched or misaligned primer ends. These misaligned primers can be extended by PolIV. Exhibits no 3'-5' exonuclease (proofreading) activity. May be involved in translesional synthesis, in conjunction with the beta clamp from PolIII. The protein is DNA polymerase IV of Shewanella baltica (strain OS185).